We begin with the raw amino-acid sequence, 976 residues long: Leucine--tRNA ligase (976 aa).

Residues M1–V23 show a composition bias toward low complexity. Positions M1 to R34 are disordered. Residues P86–H97 carry the 'HIGH' region motif. The short motif at K745 to S749 is the 'KMSKS' region element. Position 748 (K748) interacts with ATP.

This sequence belongs to the class-I aminoacyl-tRNA synthetase family.

It localises to the cytoplasm. The enzyme catalyses tRNA(Leu) + L-leucine + ATP = L-leucyl-tRNA(Leu) + AMP + diphosphate. The protein is Leucine--tRNA ligase of Mycobacterium marinum (strain ATCC BAA-535 / M).